The following is a 386-amino-acid chain: Dual-specificity RNA methyltransferase RlmN (386 aa).

The active-site Proton acceptor is Glu94. Positions 100-341 (EENRGTLCIS…VTTIRKTRGD (242 aa)) constitute a Radical SAM core domain. The cysteines at positions 107 and 347 are disulfide-linked. Cys114, Cys118, and Cys121 together coordinate [4Fe-4S] cluster. S-adenosyl-L-methionine contacts are provided by residues 173-174 (GE), Ser205, 227-229 (SLH), and Asn304. Cys347 acts as the S-methylcysteine intermediate in catalysis.

It belongs to the radical SAM superfamily. RlmN family. [4Fe-4S] cluster serves as cofactor.

Its subcellular location is the cytoplasm. It catalyses the reaction adenosine(2503) in 23S rRNA + 2 reduced [2Fe-2S]-[ferredoxin] + 2 S-adenosyl-L-methionine = 2-methyladenosine(2503) in 23S rRNA + 5'-deoxyadenosine + L-methionine + 2 oxidized [2Fe-2S]-[ferredoxin] + S-adenosyl-L-homocysteine. It carries out the reaction adenosine(37) in tRNA + 2 reduced [2Fe-2S]-[ferredoxin] + 2 S-adenosyl-L-methionine = 2-methyladenosine(37) in tRNA + 5'-deoxyadenosine + L-methionine + 2 oxidized [2Fe-2S]-[ferredoxin] + S-adenosyl-L-homocysteine. In terms of biological role, specifically methylates position 2 of adenine 2503 in 23S rRNA and position 2 of adenine 37 in tRNAs. m2A2503 modification seems to play a crucial role in the proofreading step occurring at the peptidyl transferase center and thus would serve to optimize ribosomal fidelity. The chain is Dual-specificity RNA methyltransferase RlmN from Herminiimonas arsenicoxydans.